The primary structure comprises 445 residues: 2-oxoisovalerate dehydrogenase subunit alpha, mitochondrial (445 aa).

The N-terminal 45 residues, 1 to 45, are a transit peptide targeting the mitochondrion; that stretch reads MAVAIAAARVWRPNRGLSQAALLLLWRPGARGLARSHPHRQQQQF. Thiamine diphosphate is bound by residues Tyr-158 and Arg-159. K(+) is bound at residue Ser-206. Ser-207 contacts thiamine diphosphate. K(+) contacts are provided by Pro-208, Thr-211, and Gln-212. Glu-238 is a binding site for Mg(2+). Thiamine diphosphate-binding residues include Gly-239, Ala-240, and Arg-265. Positions 267 and 269 each coordinate Mg(2+). Residue His-336 participates in thiamine diphosphate binding. Position 337 is a phosphoserine; by BCKDK (Ser-337). The residue at position 338 (Thr-338) is a Phosphothreonine. Phosphoserine is present on residues Ser-339 and Ser-347. Lys-356 is modified (N6-acetyllysine; alternate). At Lys-356 the chain carries N6-succinyllysine; alternate. Lys-380 bears the N6-succinyllysine mark.

The protein belongs to the BCKDHA family. Heterotetramer of 2 alpha/BCKDHA and 2 beta chains/BCKDHB that forms the branched-chain alpha-keto acid decarboxylase (E1) component of the BCKD complex. The branched-chain alpha-ketoacid dehydrogenase is a large complex composed of three major building blocks E1, E2 and E3. It is organized around E2, a 24-meric cubic core composed of DBT, to which are associated 6 to 12 copies of E1, and approximately 6 copies of the dehydrogenase E3, a DLD dimer. Interacts with PPM1K. It depends on thiamine diphosphate as a cofactor. Mg(2+) serves as cofactor. Post-translationally, phosphorylated at Ser-337 by BCKDK and dephosphorylated by protein phosphatase PPM1K.

Its subcellular location is the mitochondrion matrix. It catalyses the reaction N(6)-[(R)-lipoyl]-L-lysyl-[protein] + 3-methyl-2-oxobutanoate + H(+) = N(6)-[(R)-S(8)-2-methylpropanoyldihydrolipoyl]-L-lysyl-[protein] + CO2. Its function is as follows. Together with BCKDHB forms the heterotetrameric E1 subunit of the mitochondrial branched-chain alpha-ketoacid dehydrogenase (BCKD) complex. The BCKD complex catalyzes the multi-step oxidative decarboxylation of alpha-ketoacids derived from the branched-chain amino-acids valine, leucine and isoleucine producing CO2 and acyl-CoA which is subsequently utilized to produce energy. The E1 subunit catalyzes the first step with the decarboxylation of the alpha-ketoacid forming an enzyme-product intermediate. A reductive acylation mediated by the lipoylamide cofactor of E2 extracts the acyl group from the E1 active site for the next step of the reaction. In Macaca fascicularis (Crab-eating macaque), this protein is 2-oxoisovalerate dehydrogenase subunit alpha, mitochondrial (BCKDHA).